A 369-amino-acid polypeptide reads, in one-letter code: Type 2 DNA topoisomerase 6 subunit A (369 aa).

Residues 10–146 (KPREIAKQKI…LGFIPEEDGS (137 aa)) enclose the Topo IIA-type catalytic domain. The active-site O-(5'-phospho-DNA)-tyrosine intermediate is the Tyr103. Residues Glu197 and Asp249 each contribute to the Mg(2+) site.

This sequence belongs to the TOP6A family. Homodimer. Heterotetramer of two Top6A and two Top6B chains. Mg(2+) is required as a cofactor.

The catalysed reaction is ATP-dependent breakage, passage and rejoining of double-stranded DNA.. Its function is as follows. Relaxes both positive and negative superturns and exhibits a strong decatenase activity. The chain is Type 2 DNA topoisomerase 6 subunit A from Methanocaldococcus jannaschii (strain ATCC 43067 / DSM 2661 / JAL-1 / JCM 10045 / NBRC 100440) (Methanococcus jannaschii).